The following is a 361-amino-acid chain: Mitochondrial import receptor subunit TOM40 homolog (361 aa).

The span at 1-10 shows a compositional bias: low complexity; it reads MGNVLAASSP. A disordered region spans residues 1–71; the sequence is MGNVLAASSP…AASAGGTADD (71 aa). Over residues 11–36 the composition is skewed to pro residues; it reads PAGPPPPPAPPLVGLPPPPPSPPGFT. Positions 40–52 are enriched in gly residues; the sequence is LGGGLGAGAGTGR. The segment covering 59–71 has biased composition (low complexity); that stretch reads GTAAASAGGTADD.

Belongs to the Tom40 family. As to quaternary structure, forms part of the preprotein translocase complex of the outer mitochondrial membrane (TOM complex) which consists of at least 7 different proteins (TOMM5, TOMM6, TOMM7, TOMM20, TOMM22, TOMM40 and TOMM70). Interacts with mitochondrial targeting sequences. Interacts with TIMM29; linking the TIM22 complex to the TOM complex. Forms a complex with BCAP31 (via C-terminus) which mediates the translocation of components of the mitochondrial membrane respiratory chain NADH dehydrogenase (Complex I) from the cytosol to the mitochondria. Interacts (via N-terminus) with CYP1A1 (via mitochondrial targeting signal); this interaction is required for CYP1A1 translocation across the mitochondrial outer membrane.

The protein localises to the mitochondrion outer membrane. Its function is as follows. Channel-forming protein essential for import of protein precursors into mitochondria. Plays a role in the assembly of the mitochondrial membrane respiratory chain NADH dehydrogenase (Complex I) by forming a complex with BCAP31 and mediating the translocation of Complex I components from the cytosol to the mitochondria. This is Mitochondrial import receptor subunit TOM40 homolog from Bos taurus (Bovine).